The sequence spans 505 residues: L-carnitine/gamma-butyrobetaine antiporter (505 aa).

The next 12 helical transmembrane spans lie at 10 to 30 (IEPK…WLTV), 51 to 71 (WGWA…WLVF), 92 to 112 (IFMM…SIEI), 143 to 163 (GPLP…FFFV), 195 to 215 (FYLV…TPLV), 231 to 251 (LDAI…ACGL), 263 to 283 (SYLS…SFIM), 316 to 336 (WTVF…IFLA), 347 to 367 (LCFG…TVLG), 403 to 423 (LSTA…VTLI), 446 to 466 (LLVR…LLAL), and 475 to 495 (AIIA…LSFI).

This sequence belongs to the BCCT transporter (TC 2.A.15) family. CaiT subfamily. In terms of assembly, homotrimer.

It localises to the cell inner membrane. It carries out the reaction 4-(trimethylamino)butanoate(in) + (R)-carnitine(out) = 4-(trimethylamino)butanoate(out) + (R)-carnitine(in). Its pathway is amine and polyamine metabolism; carnitine metabolism. Functionally, catalyzes the exchange of L-carnitine for gamma-butyrobetaine. The polypeptide is L-carnitine/gamma-butyrobetaine antiporter (Salmonella gallinarum (strain 287/91 / NCTC 13346)).